The primary structure comprises 405 residues: tRNA (uracil(54)-C(5))-methyltransferase (405 aa).

Positions 61, 67, 70, and 137 each coordinate [4Fe-4S] cluster. S-adenosyl-L-methionine-binding positions include Gln-252, Tyr-278, Thr-283, Asp-299–Ser-300, Asp-326, and Asp-340. Cys-367 functions as the Nucleophile in the catalytic mechanism. The Proton acceptor role is filled by Glu-399.

The protein belongs to the class I-like SAM-binding methyltransferase superfamily. RNA M5U methyltransferase family.

It catalyses the reaction uridine(54) in tRNA + S-adenosyl-L-methionine = 5-methyluridine(54) in tRNA + S-adenosyl-L-homocysteine + H(+). With respect to regulation, activated by magnesium ions. Catalyzes the formation of 5-methyl-uridine at position 54 (m5U54) in tRNA. In Pyrococcus abyssi (strain GE5 / Orsay), this protein is tRNA (uracil(54)-C(5))-methyltransferase.